The following is a 220-amino-acid chain: Probable glutathione S-transferase parA (220 aa).

The 80-residue stretch at 4-83 (NNVVLLDFWP…YIDEVWHDKC (80 aa)) folds into the GST N-terminal domain. Residues S14, K41, I55, and 67–68 (ES) each bind glutathione. Residues 89 to 209 (DPYERSQARF…LPHPHKIYGF (121 aa)) enclose the GST C-terminal domain.

The protein belongs to the GST superfamily. HSP26 family.

It catalyses the reaction RX + glutathione = an S-substituted glutathione + a halide anion + H(+). In Nicotiana tabacum (Common tobacco), this protein is Probable glutathione S-transferase parA (PARA).